We begin with the raw amino-acid sequence, 118 residues long: Small ribosomal subunit protein bTHXc (118 aa).

The transit peptide at 1–55 directs the protein to the chloroplast; the sequence is MASLILGAPPRVTVALPSSRLSSSHSETAGVSLSCFTHQFSLSTSSSSSIPLVYC. The interval 61-118 is disordered; the sequence is KTAKGKRFNHSFGNARPRNKSKGRGPERVPVPPAPPRKDKFENDEKIKIDIDESLFSN. Positions 96 to 111 are enriched in basic and acidic residues; it reads PRKDKFENDEKIKIDI. S117 carries the phosphoserine modification.

Belongs to the bacterial ribosomal protein bTHX family. Part of the 30S ribosomal subunit.

The protein resides in the plastid. It localises to the chloroplast. This is Small ribosomal subunit protein bTHXc (RPS31) from Arabidopsis thaliana (Mouse-ear cress).